Reading from the N-terminus, the 411-residue chain is Acetylornithine aminotransferase, mitochondrial (411 aa).

N6-(pyridoxal phosphate)lysine is present on K262.

This sequence belongs to the class-III pyridoxal-phosphate-dependent aminotransferase family. Requires pyridoxal 5'-phosphate as cofactor.

The protein resides in the mitochondrion matrix. It carries out the reaction N(2)-acetyl-L-ornithine + 2-oxoglutarate = N-acetyl-L-glutamate 5-semialdehyde + L-glutamate. Its pathway is amino-acid biosynthesis; L-arginine biosynthesis; N(2)-acetyl-L-ornithine from L-glutamate: step 4/4. This Yarrowia lipolytica (strain CLIB 122 / E 150) (Yeast) protein is Acetylornithine aminotransferase, mitochondrial (ARG8).